Here is a 475-residue protein sequence, read N- to C-terminus: Ribulose bisphosphate carboxylase large chain (475 aa).

Positions 1-2 (MS) are excised as a propeptide. Pro3 bears the N-acetylproline mark. Lys14 carries the N6,N6,N6-trimethyllysine modification. Asn123 and Thr173 together coordinate substrate. The active-site Proton acceptor is the Lys175. Residue Lys177 coordinates substrate. Lys201, Asp203, and Glu204 together coordinate Mg(2+). N6-carboxylysine is present on Lys201. The active-site Proton acceptor is the His294. The substrate site is built by His327 and Ser379.

The protein belongs to the RuBisCO large chain family. Type I subfamily. As to quaternary structure, heterohexadecamer of 8 large chains and 8 small chains; disulfide-linked. The disulfide link is formed within the large subunit homodimers. Requires Mg(2+) as cofactor. In terms of processing, the disulfide bond which can form in the large chain dimeric partners within the hexadecamer appears to be associated with oxidative stress and protein turnover.

The protein resides in the plastid. The protein localises to the chloroplast. The catalysed reaction is 2 (2R)-3-phosphoglycerate + 2 H(+) = D-ribulose 1,5-bisphosphate + CO2 + H2O. It catalyses the reaction D-ribulose 1,5-bisphosphate + O2 = 2-phosphoglycolate + (2R)-3-phosphoglycerate + 2 H(+). Functionally, ruBisCO catalyzes two reactions: the carboxylation of D-ribulose 1,5-bisphosphate, the primary event in carbon dioxide fixation, as well as the oxidative fragmentation of the pentose substrate in the photorespiration process. Both reactions occur simultaneously and in competition at the same active site. The sequence is that of Ribulose bisphosphate carboxylase large chain from Amaranthus hypochondriacus (Prince-of-Wales feather).